Here is a 563-residue protein sequence, read N- to C-terminus: Putative cysteine ligase BshC (563 aa).

Positions 493–518 form a coiled coil; sequence KEKTYRAGRRKHDELLQQLDKAELNL.

This sequence belongs to the BshC family.

The polypeptide is Putative cysteine ligase BshC (Chlorobaculum tepidum (strain ATCC 49652 / DSM 12025 / NBRC 103806 / TLS) (Chlorobium tepidum)).